Consider the following 106-residue polypeptide: Small ribosomal subunit protein uS10 (106 aa).

Belongs to the universal ribosomal protein uS10 family. As to quaternary structure, part of the 30S ribosomal subunit.

Involved in the binding of tRNA to the ribosomes. The chain is Small ribosomal subunit protein uS10 from Pyrobaculum calidifontis (strain DSM 21063 / JCM 11548 / VA1).